The sequence spans 617 residues: Vitamin B12 transporter BtuB (617 aa).

An N-terminal signal peptide occupies residues 1-22; it reads MRKTFLAITCASLLSPTFYSQA. A TonB box motif is present at residues 29-36; that stretch reads ETVVVTAN. In terms of domain architecture, TBDR plug spans 40-154; sequence QIDGAVLAQT…ISGVINIITR (115 aa). In terms of domain architecture, TBDR beta-barrel spans 159-617; it reads DDSGRVSAGY…QYFVSADYRF (459 aa). A TonB C-terminal box motif is present at residues 600–617; sequence VGYVTPGRQYFVSADYRF.

It belongs to the TonB-dependent receptor family. BtuB (TC 1.B.14.3.1) subfamily.

The protein localises to the cell outer membrane. Its function is as follows. Involved in the active translocation of vitamin B12 (cyanocobalamin) across the outer membrane to the periplasmic space. It derives its energy for transport by interacting with the trans-periplasmic membrane protein TonB. The polypeptide is Vitamin B12 transporter BtuB (Vibrio campbellii (strain ATCC BAA-1116)).